The following is a 156-amino-acid chain: Snaclec A10 (156 aa).

A signal peptide spans 1 to 23; the sequence is MGRSISVSFGLLVVFLSLSGIGA. 3 disulfide bridges follow: Cys27–Cys38, Cys55–Cys154, and Cys129–Cys146. In terms of domain architecture, C-type lectin spans 34–155; the sequence is YDQHCYQAVD…CGQPYRFTCE (122 aa).

Belongs to the snaclec family. As to quaternary structure, heterodimer; disulfide-linked. In terms of tissue distribution, expressed by the venom gland.

The protein localises to the secreted. Its function is as follows. Interferes with one step of hemostasis (modulation of platelet aggregation, or coagulation cascade, for example). The chain is Snaclec A10 from Macrovipera lebetinus (Levantine viper).